The sequence spans 731 residues: NADH-ubiquinone oxidoreductase 75 kDa subunit, mitochondrial (731 aa).

A mitochondrion-targeting transit peptide spans 1-27; sequence MIRAPLVKALGALGSPTHQMASRAVRT. One can recognise a 2Fe-2S ferredoxin-type domain in the interval 40–118; that stretch reads EKIEVFVDDI…GWRIKTNSDL (79 aa). [2Fe-2S] cluster contacts are provided by Cys-74, Cys-85, Cys-88, and Cys-102. Residues 118-157 form the 4Fe-4S His(Cys)3-ligated-type domain; the sequence is LTRKAREGVMEFLLMNHPLDCPICDQGGECDLQDQAMAFG. 8 residues coordinate [4Fe-4S] cluster: His-134, Cys-138, Cys-141, Cys-147, Cys-190, Cys-193, Cys-196, and Cys-240. A 4Fe-4S Mo/W bis-MGD-type domain is found at 259-315; that stretch reads IRKVSSIDVLDAVGSNIVVSTRTNEVLRILPRENEDVNEEWLADKSRFACDGLKRQR.

Belongs to the complex I 75 kDa subunit family. Complex I is composed of about 45 different subunits. [2Fe-2S] cluster is required as a cofactor. [4Fe-4S] cluster serves as cofactor.

It is found in the mitochondrion inner membrane. The catalysed reaction is a ubiquinone + NADH + 5 H(+)(in) = a ubiquinol + NAD(+) + 4 H(+)(out). Functionally, core subunit of the mitochondrial membrane respiratory chain NADH dehydrogenase (Complex I) that is believed to belong to the minimal assembly required for catalysis. Complex I functions in the transfer of electrons from NADH to the respiratory chain. The immediate electron acceptor for the enzyme is believed to be ubiquinone. This is the largest subunit of complex I and it is a component of the iron-sulfur (IP) fragment of the enzyme. It may form part of the active site crevice where NADH is oxidized. In Drosophila melanogaster (Fruit fly), this protein is NADH-ubiquinone oxidoreductase 75 kDa subunit, mitochondrial.